A 423-amino-acid chain; its full sequence is Enolase (423 aa).

Gln165 is a (2R)-2-phosphoglycerate binding site. Glu209 (proton donor) is an active-site residue. Mg(2+) contacts are provided by Asp244, Glu285, and Asp310. 4 residues coordinate (2R)-2-phosphoglycerate: Lys335, Arg364, Ser365, and Lys386. Catalysis depends on Lys335, which acts as the Proton acceptor.

It belongs to the enolase family. Homooctamer formed by a tetramer of dimers. Mg(2+) serves as cofactor.

It localises to the cytoplasm. The protein resides in the secreted. It is found in the cell surface. It carries out the reaction (2R)-2-phosphoglycerate = phosphoenolpyruvate + H2O. It participates in carbohydrate degradation; glycolysis; pyruvate from D-glyceraldehyde 3-phosphate: step 4/5. Its activity is regulated as follows. The covalent binding to the substrate causes inactivation of the enzyme, and possibly serves as a signal for the export of the protein. Its function is as follows. Catalyzes the reversible conversion of 2-phosphoglycerate (2-PG) into phosphoenolpyruvate (PEP). It is essential for the degradation of carbohydrates via glycolysis. The polypeptide is Enolase (Methanocaldococcus jannaschii (strain ATCC 43067 / DSM 2661 / JAL-1 / JCM 10045 / NBRC 100440) (Methanococcus jannaschii)).